We begin with the raw amino-acid sequence, 895 residues long: Androgen receptor (895 aa).

A modulating region spans residues 1-533; sequence MEVQLGLGRV…PIDYYFPPQK (533 aa). Positions 1–562 are interaction with ZNF318; it reads MEVQLGLGRV…GSCKVFFKRA (562 aa). Disordered regions lie at residues 33 to 150 and 175 to 211; these read VIQN…LSLL and QLLQQQQQEAVSEGSSSGRAREASGAPTSSKDNYLGG. Composition is skewed to low complexity over residues 44-81 and 175-200; these read AASAAPPGASLQQQQQQQQETSPRQQQQQQQGEDGSPQ and QLLQQQQQEAVSEGSSSGRAREASGA. The residue at position 65 (serine 65) is a Phosphoserine; by CDK9. Serine 79 is modified (phosphoserine). Positions 201-211 are enriched in polar residues; the sequence is PTSSKDNYLGG. Phosphotyrosine; by CSK is present on tyrosine 208. Position 241 is a phosphoserine (serine 241). Position 252 is a phosphotyrosine; by CSK and TNK2 (tyrosine 252). Phosphotyrosine; by CSK occurs at positions 292, 331, 342, and 347. Tyrosine 348 carries the phosphotyrosine; by CSK and TNK2 modification. Residue lysine 371 forms a Glycyl lysine isopeptide (Lys-Gly) (interchain with G-Cter in SUMO) linkage. Tyrosine 378 carries the phosphotyrosine; by CSK modification. A Glycyl lysine isopeptide (Lys-Gly) (interchain with G-Cter in SUMO) cross-link involves residue lysine 496. A phosphotyrosine; by CSK mark is found at tyrosine 510 and tyrosine 527. Residues 527–894 form an interaction with LPXN region; the sequence is YYFPPQKTCL…GKVKPIYFHT (368 aa). The nuclear receptor DNA-binding region spans 534-607; the sequence is TCLICGDEAS…AGMTLGARKL (74 aa). 2 NR C4-type zinc fingers span residues 535–555 and 571–595; these read CLICGDEASGCHYGALTCGSC and CASRNDCTIDKFRRKNCPSCRLRKC. The segment at 547 to 637 is interaction with HIPK3; that stretch reads YGALTCGSCK…TEETAQKLTV (91 aa). Positions 567–894 are interaction with CCAR1; that stretch reads QKYLCASRND…GKVKPIYFHT (328 aa). Residues 600 to 894 are interaction with KAT7; the sequence is MTLGARKLKK…GKVKPIYFHT (295 aa). A Phosphoserine; by STK4/MST1 modification is found at serine 626. Positions 644–875 constitute an NR LBD domain; that stretch reads ECQPIFLNVL…DFPEMMAEII (232 aa). The 17beta-hydroxy-5alpha-androstan-3-one site is built by asparagine 681 and arginine 728. Glycyl lysine isopeptide (Lys-Gly) (interchain with G-Cter in ubiquitin) cross-links involve residues lysine 821 and lysine 823. Residue threonine 853 participates in 17beta-hydroxy-5alpha-androstan-3-one binding. Tyrosine 891 is subject to Phosphotyrosine; by CSK.

Belongs to the nuclear hormone receptor family. NR3 subfamily. Binds DNA as a homodimer. Part of a ternary complex containing AR, EFCAB6/DJBP and PARK7. Interacts with HIPK3 and NR0B2 in the presence of androgen. The ligand binding domain interacts with KAT7/HBO1 in the presence of dihydrotestosterone. Interacts with EFCAB6/DJBP, PQBP1, RANBP9, RBAK, SPDEF, SRA1, TGFB1I1 and RREB1. Interacts with ZMIZ1/ZIMP10 and ZMIZ2/ZMIP7 which both enhance its transactivation activity. Interacts with SLC30A9 and RAD54L2/ARIP4. Interacts with MACROD1 (via macro domain). Interacts via the ligand-binding domain with LXXLL and FXXLF motifs from NCOA1, NCOA2, NCOA3 and MAGEA11. Interacts (via nuclear receptor DNA binding domain and nuclear receptor ligand binding domain) with NCOA4. The AR N-terminal poly-Gln region binds Ran resulting in enhancement of AR-mediated transactivation. Ran-binding decreases as the poly-Gln length increases. Interacts with HIP1 (via coiled coil domain). Interacts (via ligand-binding domain) with TRIM68. Interacts with TNK2. Interacts with USP26. Interacts with RNF6. Interacts (regulated by RNF6 probably through polyubiquitination) with RNF14; regulates AR transcriptional activity. Interacts with PRMT2 and TRIM24. Interacts with RACK1. Interacts with RANBP10; this interaction enhances dihydrotestosterone-induced AR transcriptional activity. Interacts with PRPF6 in a hormone-independent way; this interaction enhances dihydrotestosterone-induced AR transcriptional activity. Interacts with STK4/MST1. Interacts with ZIPK/DAPK3. Interacts with LPXN. Interacts with MAK. Part of a complex containing AR, MAK and NCOA3. Interacts with CRY1. Interacts with CCAR1 and GATA2. Interacts with ZNF318. Interacts with BUD31. Interacts with ARID4A. Interacts with ARID4B. Interacts (via NR LBD domain) with ZBTB7A; the interaction is direct and androgen-dependent. Interacts with NCOR1. Interacts with NCOR2. Interacts with CRY2 in a ligand-dependent manner. In terms of processing, phosphorylated in prostate cancer cells in response to several growth factors including EGF. Phosphorylation is induced by c-Src kinase (CSK). Tyr-510 is one of the major phosphorylation sites and an increase in phosphorylation and Src kinase activity is associated with prostate cancer progression. Phosphorylation by TNK2 enhances the DNA-binding and transcriptional activity. Phosphorylation at Ser-65 by CDK9 regulates AR promoter selectivity and cell growth. Post-translationally, sumoylated on Lys-371 (major) and Lys-496. Ubiquitinated. Deubiquitinated by USP26. 'Lys-6' and 'Lys-27'-linked polyubiquitination by RNF6 modulates AR transcriptional activity and specificity. Palmitoylated by ZDHHC7 and ZDHHC21. Palmitoylation is required for plasma membrane targeting and for rapid intracellular signaling via ERK and AKT kinases and cAMP generation.

The protein resides in the nucleus. Its subcellular location is the cytoplasm. In terms of biological role, steroid hormone receptors are ligand-activated transcription factors that regulate eukaryotic gene expression and affect cellular proliferation and differentiation in target tissues. Transcription factor activity is modulated by bound coactivator and corepressor proteins like ZBTB7A that recruits NCOR1 and NCOR2 to the androgen response elements/ARE on target genes, negatively regulating androgen receptor signaling and androgen-induced cell proliferation. Transcription activation is also down-regulated by NR0B2. Activated, but not phosphorylated, by HIPK3 and ZIPK/DAPK3. The protein is Androgen receptor (AR) of Macaca fascicularis (Crab-eating macaque).